Consider the following 294-residue polypeptide: Foldase protein PrsA 1 (294 aa).

Residues 1-21 form the signal peptide; sequence MTKLKKVMISVIAATLLLLAG. A lipid anchor (N-palmitoyl cysteine) is attached at Cys-22. Cys-22 carries S-diacylglycerol cysteine lipidation. The 92-residue stretch at 135-226 folds into the PpiC domain; it reads EPDITVRHIL…YGYHLIQLVK (92 aa).

This sequence belongs to the PrsA family.

It localises to the cell membrane. The catalysed reaction is [protein]-peptidylproline (omega=180) = [protein]-peptidylproline (omega=0). In terms of biological role, plays a major role in protein secretion by helping the post-translocational extracellular folding of several secreted proteins. This is Foldase protein PrsA 1 from Listeria monocytogenes serotype 4b (strain F2365).